Here is a 38-residue protein sequence, read N- to C-terminus: Toxic protein TimP (38 aa).

A transmembrane helix spans residues M1–A20.

Belongs to the TimP toxin family.

The protein resides in the cell inner membrane. Toxic component of a probable type I toxin-antitoxin (TA) system. Neutralized by sRNA antitoxin TimR which binds to the 5' UTR of timP mRNA and inhibits translation. When TimP is expressed from its promoter in the absence of antitoxin leads to mild cell stress; overexpression in situ is toxic to the cell and causes membrane leakage. The antitoxin gene is encoded immediately upstream and transcribed divergently from the toxin gene; antitoxin RNA is less stable than timP mRNA. The polypeptide is Toxic protein TimP (Salmonella typhimurium (strain SL1344)).